Reading from the N-terminus, the 20-residue chain is Short cationic peptide-4d (20 aa).

Position 20 is a glutamic acid 1-amide (E20).

As to expression, expressed by the venom gland.

Its subcellular location is the secreted. The protein is Short cationic peptide-4d of Cupiennius salei (American wandering spider).